Reading from the N-terminus, the 199-residue chain is MARCKS-related protein (199 aa).

The segment at 1-199 (MGSQSSKAPR…PTPAGAEQNE (199 aa)) is disordered. The N-myristoyl glycine moiety is linked to residue G2. Position 14 is a phosphothreonine (T14). Residues 16–26 (EEAAGASPAKA) show a composition bias toward low complexity. S22, S36, and S48 each carry phosphoserine. The span at 53 to 64 (GTDEAAGATGDA) shows a compositional bias: low complexity. S71 is subject to Phosphoserine. Over residues 76–85 (AKGDAPPKET) the composition is skewed to basic and acidic residues. T85 is modified (phosphothreonine). Over residues 86-98 (PKKKKKFSFKKPF) the composition is skewed to basic residues. The interval 87–110 (KKKKKFSFKKPFKLSGLSFKRNRK) is effector domain involved in lipid-binding and calmodulin-binding. A phosphoserine; by PKC mark is found at S93, S101, and S104. Position 119 is a phosphoserine (S119). S120 carries the post-translational modification Phosphoserine; by MAPK8. S135 is subject to Phosphoserine. T148 carries the phosphothreonine; by MAPK8 modification. At S151 the chain carries Phosphoserine. The segment covering 156–167 (AKGAEAGAACKG) has biased composition (low complexity). The residue at position 170 (T170) is a Phosphothreonine. The span at 181–199 (STPSGPESGPTPAGAEQNE) shows a compositional bias: low complexity. Phosphothreonine; by MAPK8 is present on T182. Residue T191 is modified to Phosphothreonine.

It belongs to the MARCKS family. In terms of assembly, binds to filamentous actin (F-actin), but not to monomeric G-actin, independently of its phosphorylation status. Interacts with calmodulin. Phosphorylated. Phosphorylation at Ser-120 and Thr-182 is non-redundantly catalyzed by MAPK8 in vivo. Phosphorylation at Thr-148 is preferentially catalyzed by MAPK8 in vivo, but this modification can also be catalyzed by other kinases in the absence of MAPK8. May be phosphorylated by protein kinase C, which disrupts the interaction with calmodulin.

Its subcellular location is the cytoplasm. It localises to the cytoskeleton. The protein localises to the cell membrane. In terms of biological role, controls cell movement by regulating actin cytoskeleton homeostasis and filopodium and lamellipodium formation. When unphosphorylated, induces cell migration. When phosphorylated by MAPK8, induces actin bundles formation and stabilization, thereby reducing actin plasticity, hence restricting cell movement, including neuronal migration. May be involved in coupling the protein kinase C and calmodulin signal transduction systems. The sequence is that of MARCKS-related protein (MARCKSL1) from Oryctolagus cuniculus (Rabbit).